We begin with the raw amino-acid sequence, 179 residues long: UPF0227 protein Sbal_2415 (179 aa).

This sequence belongs to the UPF0227 family.

The polypeptide is UPF0227 protein Sbal_2415 (Shewanella baltica (strain OS155 / ATCC BAA-1091)).